A 388-amino-acid chain; its full sequence is Alpha-2A adrenergic receptor (388 aa).

The Extracellular segment spans residues 1 to 22 (MICGANATNGTNATKEYTLLVA). N-linked (GlcNAc...) asparagine glycans are attached at residues asparagine 6, asparagine 9, and asparagine 12. A helical membrane pass occupies residues 23–48 (LPLSIAVGLLILLIIFGNVLVIIAVF). Topologically, residues 49–59 (TSRALRAPQNL) are cytoplasmic. Residues 60–85 (FLVSLASADILVATLVMPFSLANELM) traverse the membrane as a helical segment. The Extracellular segment spans residues 86–95 (GMWTFGGVWC). Cysteine 95 and cysteine 169 are oxidised to a cystine. The helical transmembrane segment at 96–118 (EIYLALDVLFCTASITHLCAISL) threads the bilayer. Over 119 to 138 (DRYWSITQAIEYNLKRTPQR) the chain is Cytoplasmic. Residues 139 to 162 (IKRIIFIVWIIAAVISCPPLITMK) traverse the membrane as a helical segment. Over 163-173 (KSEGDICDINK) the chain is Extracellular. The helical transmembrane segment at 174–198 (EKWYIVSSCIGSFFLPCIIMVLVYI) threads the bilayer. The Cytoplasmic segment spans residues 199 to 311 (RIYQIAKKRT…RQNREKRFTF (113 aa)). The interval 208–291 (TRAPPGDHRK…PGDGDKTEAC (84 aa)) is disordered. The segment covering 212–231 (PGDHRKNEVGKKENDPHEKL) has biased composition (basic and acidic residues). Residues 266 to 275 (LKKKSSKGKT) show a composition bias toward basic residues. Residues 312–337 (VLAVVIGVFVICWFPFFFTYTFTAFC) form a helical membrane-spanning segment. At 338 to 344 (DCCVPET) the chain is on the extracellular side. A helical transmembrane segment spans residues 345–368 (LFKFFFWFGYCNSSLNPIIYTIFN). Residues 369 to 388 (NDFRRSFKKILCRRDKRRVV) lie on the Cytoplasmic side of the membrane. Residue cysteine 380 is the site of S-palmitoyl cysteine attachment.

Belongs to the G-protein coupled receptor 1 family. Adrenergic receptor subfamily. ADRA2A sub-subfamily.

Its subcellular location is the cell membrane. Its function is as follows. Alpha-2 adrenergic receptors mediate the catecholamine-induced inhibition of adenylate cyclase through the action of G proteins. The order of potency for this receptor is dexmedetomidine &gt; oxymetazoline = epinephrine &gt; norepinephrine. The sequence is that of Alpha-2A adrenergic receptor from Danio rerio (Zebrafish).